Consider the following 67-residue polypeptide: DNA-directed RNA polymerases I, II, and III subunit RPABC5 (67 aa).

Positions 7, 10, 44, and 45 each coordinate Zn(2+).

The protein belongs to the archaeal Rpo10/eukaryotic RPB10 RNA polymerase subunit family. In terms of assembly, component of the RNA polymerase I (Pol I), RNA polymerase II (Pol II) and RNA polymerase III (Pol III) complexes consisting of at least 13, 12 and 17 subunits, respectively.

The protein resides in the nucleus. In terms of biological role, DNA-dependent RNA polymerase catalyzes the transcription of DNA into RNA using the four ribonucleoside triphosphates as substrates. Common component of RNA polymerases I, II and III which synthesize ribosomal RNA precursors, mRNA precursors and many functional non-coding RNAs, and a small RNAs, such as 5S rRNA and tRNAs, respectively. Pol II is the central component of the basal RNA polymerase II transcription machinery. Pols are composed of mobile elements that move relative to each other. In Pol II, RBP10 is part of the core element with the central large cleft. The protein is DNA-directed RNA polymerases I, II, and III subunit RPABC5 of Caenorhabditis briggsae.